A 299-amino-acid chain; its full sequence is MERQLEAYCAHLRNERQVSEHTLLAYRRDLEKVIEYCNTQGIAGWGALQIQQLRQLIARQHHQGQSSRSLARLLSAVRGLYRYLNREGLCQHDPASGLSAPKGERRLPKVLDTDRALQLLDGGVDDDFIARRDQAILELFYSSGLRLSELTNLDLEHLDLAAGLVQVLGKGGKARVLPVGRKAREAMQQWLRLRGIGGPRDGAVFISRQGNRLGPRAIQMRVKAAGERELGQHLHPHMLRHSFASHVLESSQDLRAVQEMLGHADISTTQIYTHLDFQHLAAVYDSAHPRAKRSKGTDS.

One can recognise a Core-binding (CB) domain in the interval methionine 1–asparagine 85. Positions arginine 106–aspartate 285 constitute a Tyr recombinase domain. Catalysis depends on residues arginine 146, lysine 170, histidine 237, arginine 240, and histidine 263. The O-(3'-phospho-DNA)-tyrosine intermediate role is filled by tyrosine 272.

This sequence belongs to the 'phage' integrase family. XerC subfamily. Forms a cyclic heterotetrameric complex composed of two molecules of XerC and two molecules of XerD.

It localises to the cytoplasm. Site-specific tyrosine recombinase, which acts by catalyzing the cutting and rejoining of the recombining DNA molecules. The XerC-XerD complex is essential to convert dimers of the bacterial chromosome into monomers to permit their segregation at cell division. It also contributes to the segregational stability of plasmids. The sequence is that of Tyrosine recombinase XerC from Pseudomonas putida (strain W619).